Here is a 176-residue protein sequence, read N- to C-terminus: ATP synthase subunit b (176 aa).

A helical membrane pass occupies residues 7 to 27; sequence IQIPDGSAIFVLLTFILLMFI. Residues 75–94 are disordered; that stretch reads SQSQATALMENARKSSEEQS. Basic and acidic residues predominate over residues 85-94; the sequence is NARKSSEEQS.

Belongs to the ATPase B chain family. F-type ATPases have 2 components, F(1) - the catalytic core - and F(0) - the membrane proton channel. F(1) has five subunits: alpha(3), beta(3), gamma(1), delta(1), epsilon(1). F(0) has three main subunits: a(1), b(2) and c(10-14). The alpha and beta chains form an alternating ring which encloses part of the gamma chain. F(1) is attached to F(0) by a central stalk formed by the gamma and epsilon chains, while a peripheral stalk is formed by the delta and b chains.

It is found in the cell membrane. F(1)F(0) ATP synthase produces ATP from ADP in the presence of a proton or sodium gradient. F-type ATPases consist of two structural domains, F(1) containing the extramembraneous catalytic core and F(0) containing the membrane proton channel, linked together by a central stalk and a peripheral stalk. During catalysis, ATP synthesis in the catalytic domain of F(1) is coupled via a rotary mechanism of the central stalk subunits to proton translocation. Its function is as follows. Component of the F(0) channel, it forms part of the peripheral stalk, linking F(1) to F(0). This Oenococcus oeni (strain ATCC BAA-331 / PSU-1) protein is ATP synthase subunit b.